We begin with the raw amino-acid sequence, 466 residues long: Muscarinic acetylcholine receptor M2 (466 aa).

Residues 1–22 (MNNSTNSSNNSLALTSPYKTFE) lie on the Extracellular side of the membrane. Residues Asn-2, Asn-3, Asn-6, and Asn-9 are each glycosylated (N-linked (GlcNAc...) asparagine). Residues 23–45 (VVFIVLVAGSLSLVTIIGNILVM) traverse the membrane as a helical segment. Residues 46-59 (VSIKVNRHLQTVNN) are Cytoplasmic-facing. The helical transmembrane segment at 60–80 (YFLFSLACADLIIGVFSMNLY) threads the bilayer. Residues 81–97 (TLYTVIGYWPLGPVVCD) are Extracellular-facing. Cys-96 and Cys-176 are joined by a disulfide. The helical transmembrane segment at 98–119 (LWLALDYVVSNASVMNLLIISF) threads the bilayer. The Important for signaling signature appears at 120–122 (DRY). Topologically, residues 120 to 139 (DRYFCVTKPLTYPVKRTTKM) are cytoplasmic. Residues 140 to 162 (AGMMIAAAWVLSFILWAPAILFW) traverse the membrane as a helical segment. Residues 163-184 (QFIVGVRTVEDGECYIQFFSNA) lie on the Extracellular side of the membrane. The chain crosses the membrane as a helical span at residues 185 to 209 (AVTFGTAIAAFYLPVIIMTVLYWHI). The Cytoplasmic segment spans residues 210–387 (SRASKSRIKK…PPSREKKVTR (178 aa)). The interval 218 to 355 (KKDKKEPVAN…VVGSSGQNGD (138 aa)) is disordered. A Phosphoserine modification is found at Ser-232. Positions 254 to 270 (GLEHNKIQNGKAPRDPV) are enriched in basic and acidic residues. Polar residues-rich tracts occupy residues 284–293 (NDSTSVSAVA), 304–313 (DENTVSTSLG), and 334–353 (SDSC…SGQN). A helical transmembrane segment spans residues 388-410 (TILAILLAFIITWAPYNVMVLIN). Over 411-418 (TFCAPCIP) the chain is Extracellular. A disulfide bond links Cys-413 and Cys-416. The chain crosses the membrane as a helical span at residues 419 to 442 (NTVWTIGYWLCYINSTINPACYAL). The Important for signaling motif lies at 436 to 440 (NPACY). Over 443-466 (CNATFKKTFKHLLMCHYKNIGATR) the chain is Cytoplasmic. 3 positions are modified to phosphothreonine: Thr-446, Thr-450, and Thr-465.

It belongs to the G-protein coupled receptor 1 family. Muscarinic acetylcholine receptor subfamily. CHRM2 sub-subfamily. Interacts with ARRB1 and ARRB2. Interacts with RACK1; the interaction regulates CHRM2 internalization. Post-translationally, phosphorylated in response to agonist treatment.

The protein localises to the cell membrane. It is found in the postsynaptic cell membrane. Functionally, the muscarinic acetylcholine receptor mediates various cellular responses, including inhibition of adenylate cyclase, breakdown of phosphoinositides and modulation of potassium channels through the action of G proteins. Primary transducing effect is adenylate cyclase inhibition. Signaling promotes phospholipase C activity, leading to the release of inositol trisphosphate (IP3); this then triggers calcium ion release into the cytosol. The chain is Muscarinic acetylcholine receptor M2 (CHRM2) from Homo sapiens (Human).